We begin with the raw amino-acid sequence, 258 residues long: Serine/arginine-rich splicing factor x16 (258 aa).

An RRM domain is found at 8–81 (RKVYVGDLGN…RRARVELSTG (74 aa)). 2 disordered regions span residues 81–113 (GKYA…GGRG) and 130–258 (CRER…VSRD). Residues 86-103 (SGGGGGGGGGGGGGGGLG) are compositionally biased toward gly residues. The span at 104–113 (GRDRGGGGRG) shows a compositional bias: basic and acidic residues. The CCHC-type zinc-finger motif lies at 116–132 (KCYECGGRGHFARHCRE). Composition is skewed to basic residues over residues 130–141 (CRERKARQRRRS) and 149–166 (STSR…RSRS). Basic and acidic residues-rich tracts occupy residues 180 to 197 (NGRD…HERN) and 210 to 221 (RRYEDEDDDRVR). Low complexity-rich tracts occupy residues 231 to 240 (RSASPAVRRG) and 249 to 258 (SSASRSVSRD).

Interacts (via Arg/Ser-rich region) with Alsin2/CG7564, Rbp1 and Doa (via N-terminus). In terms of processing, highly phosphorylated. May be phosphorylated by the serine/threonine-protein kinase Doa.

Its subcellular location is the nucleus. Functionally, serine/arginine-rich splicing factor (SR protein) involved in differential exon usage during RNA transcript processing, probably by binding exonic splicing enhancer elements and recruiting components of the splicing machinery. Binds RNA stem-loop structures with consensus sequence 5'-CCGUNUNKNW-3'. Regulator of genes involved in lipid and carbohydrate metabolism, the immune response and the response to xenobiotics. In Drosophila melanogaster (Fruit fly), this protein is Serine/arginine-rich splicing factor x16.